Reading from the N-terminus, the 455-residue chain is Glutamyl-tRNA reductase (455 aa).

Residues 49–52, serine 109, 114–116, and glutamine 120 each bind substrate; these read TCNR and ETQ. Residue cysteine 50 is the Nucleophile of the active site. 189–194 contacts NADP(+); the sequence is GAGKMG.

This sequence belongs to the glutamyl-tRNA reductase family. As to quaternary structure, homodimer.

It carries out the reaction (S)-4-amino-5-oxopentanoate + tRNA(Glu) + NADP(+) = L-glutamyl-tRNA(Glu) + NADPH + H(+). It participates in porphyrin-containing compound metabolism; protoporphyrin-IX biosynthesis; 5-aminolevulinate from L-glutamyl-tRNA(Glu): step 1/2. Its function is as follows. Catalyzes the NADPH-dependent reduction of glutamyl-tRNA(Glu) to glutamate 1-semialdehyde (GSA). In Bacillus pumilus (strain SAFR-032), this protein is Glutamyl-tRNA reductase.